The chain runs to 217 residues: Uracil-DNA glycosylase (217 aa).

Catalysis depends on Asp62, which acts as the Proton acceptor.

The protein belongs to the uracil-DNA glycosylase (UDG) superfamily. UNG family.

It is found in the cytoplasm. The catalysed reaction is Hydrolyzes single-stranded DNA or mismatched double-stranded DNA and polynucleotides, releasing free uracil.. Functionally, excises uracil residues from the DNA which can arise as a result of misincorporation of dUMP residues by DNA polymerase or due to deamination of cytosine. The protein is Uracil-DNA glycosylase of Streptococcus sanguinis (strain SK36).